A 236-amino-acid chain; its full sequence is Virion protein US10 homolog (236 aa).

The segment at 1-32 is disordered; it reads MDGAYGHVHNGSPMAVDGEESGAGTGTGAGAD. Gly residues predominate over residues 21–31; sequence SGAGTGTGAGA. A zinc finger lies at 138–150; sequence CAYWCCLGHAFAC.

Belongs to the herpesviridae US10 family. Post-translationally, phosphorylated.

It localises to the virion tegument. It is found in the host nucleus matrix. This chain is Virion protein US10 homolog (IR5), found in Equine herpesvirus 1 (strain Kentucky A) (EHV-1).